The following is a 389-amino-acid chain: Phosphopentomutase (389 aa).

The Mn(2+) site is built by Asp10, Asp282, His287, Asp323, His324, and His335.

The protein belongs to the phosphopentomutase family. Requires Mn(2+) as cofactor.

It is found in the cytoplasm. The catalysed reaction is 2-deoxy-alpha-D-ribose 1-phosphate = 2-deoxy-D-ribose 5-phosphate. The enzyme catalyses alpha-D-ribose 1-phosphate = D-ribose 5-phosphate. It participates in carbohydrate degradation; 2-deoxy-D-ribose 1-phosphate degradation; D-glyceraldehyde 3-phosphate and acetaldehyde from 2-deoxy-alpha-D-ribose 1-phosphate: step 1/2. Functionally, isomerase that catalyzes the conversion of deoxy-ribose 1-phosphate (dRib-1-P) and ribose 1-phosphate (Rib-1-P) to deoxy-ribose 5-phosphate (dRib-5-P) and ribose 5-phosphate (Rib-5-P), respectively. The sequence is that of Phosphopentomutase from Clostridium kluyveri (strain NBRC 12016).